A 303-amino-acid polypeptide reads, in one-letter code: Zinc transporter ZIP9-B (303 aa).

The helical transmembrane segment at 7–27 (ISLLSLAMLVGCYVSGIIPLA) threads the bilayer. Asparagine 29 is a glycosylation site (N-linked (GlcNAc...) asparagine). Helical transmembrane passes span 35 to 55 (LKLVTVLGAGLLCGTALAVIV), 102 to 122 (AYIGVSLVLGFVFMLLVDQIG), 142 to 162 (ITTTLGLVVHAAADGVALGAA), 172 to 192 (LIVFVAIMLHKAPAAFGLVSF), and 206 to 226 (HLLVFALAAPLLSMLTYLGLS). A glycan (N-linked (GlcNAc...) asparagine) is linked at asparagine 237. The next 2 membrane-spanning stretches (helical) occupy residues 240 to 260 (GVAMLFSAGTFLYVATVHVLP) and 282 to 302 (LEVCALVLGCLIPLVLSIGHQ).

Belongs to the ZIP transporter (TC 2.A.5) family.

Its subcellular location is the golgi apparatus. The protein resides in the trans-Golgi network membrane. It localises to the cell membrane. It is found in the cytoplasm. The protein localises to the perinuclear region. Its subcellular location is the mitochondrion. The protein resides in the nucleus. The enzyme catalyses Zn(2+)(in) = Zn(2+)(out). In terms of biological role, transports zinc ions across cell and organelle membranes into the cytoplasm and regulates intracellular zinc homeostasis. Participates in the zinc ions efflux out of the secretory compartments. Regulates intracellular zinc level, resulting in the enhancement of AKT1 and MAPK3/MAPK1 (Erk1/2) phosphorylation in response to the BCR activation. Also functions as a membrane androgen receptor that mediates, through a G protein, the non-classical androgen signaling pathway, characterized by the activation of MAPK3/MAPK1 (Erk1/2) and transcription factors CREB1 or ATF1. Moreover, has dual functions as a membrane-bound androgen receptor and as an androgen-dependent zinc transporter both of which are mediated through an inhibitory G protein (Gi) that mediates both MAP kinase and zinc signaling leading to the androgen-dependent apoptotic process. The chain is Zinc transporter ZIP9-B (slc39a9-b) from Xenopus laevis (African clawed frog).